Consider the following 242-residue polypeptide: ATP synthase subunit a (242 aa).

The next 5 helical transmembrane spans lie at 28-48 (LHGQ…LLVV), 89-109 (LPFV…GALI), 128-148 (INTT…AGLS), 193-213 (LVVA…AMFL), and 214-234 (GLFT…NYIG).

Belongs to the ATPase A chain family. In terms of assembly, F-type ATPases have 2 components, CF(1) - the catalytic core - and CF(0) - the membrane proton channel. CF(1) has five subunits: alpha(3), beta(3), gamma(1), delta(1), epsilon(1). CF(0) has four main subunits: a, b, b' and c.

It localises to the cellular thylakoid membrane. In terms of biological role, key component of the proton channel; it plays a direct role in the translocation of protons across the membrane. This chain is ATP synthase subunit a, found in Synechococcus sp. (strain WH7803).